The chain runs to 123 residues: Histone H2B (123 aa).

The disordered stretch occupies residues 1–30; sequence MPPKTSGKAAKKAGKAQKNITKTDKKKKRK. At Pro2 the chain carries N-methylproline; partial. Lys44 carries the post-translational modification N6-succinyllysine. The O-linked (GlcNAc) serine glycan is linked to Ser110. N6-succinyllysine is present on residues Lys114 and Lys118. A Glycyl lysine isopeptide (Lys-Gly) (interchain with G-Cter in ubiquitin) cross-link involves residue Lys118.

Belongs to the histone H2B family. In terms of assembly, the nucleosome is a histone octamer containing two molecules each of H2A, H2B, H3 and H4 assembled in one H3-H4 heterotetramer and two H2A-H2B heterodimers. The octamer wraps approximately 147 bp of DNA. Post-translationally, phosphorylated by the catalytic component of the Dbf4-dependent kinase (DDK) complex Cdc7. Monoubiquitination of Lys-118 by Bre1 gives a specific tag for epigenetic transcriptional activation and is also prerequisite for histone H3 'Lys-4' and 'Lys-79' methylation. Deubiquitination of Lys-118 by the SAGA complex is involved in activating transcription of a large subset of genes. In terms of processing, methylation at Pro-2 increases upon heat shock. Post-translationally, glcNAcylation at Ser-110 promotes monoubiquitination of Lys-118. It fluctuates in response to extracellular glucose, and associates with transcribed genes.

It localises to the nucleus. The protein resides in the chromosome. Functionally, core component of nucleosome. Nucleosomes wrap and compact DNA into chromatin, limiting DNA accessibility to the cellular machineries which require DNA as a template. Histones thereby play a central role in transcription regulation, DNA repair, DNA replication and chromosomal stability. DNA accessibility is regulated via a complex set of post-translational modifications of histones, also called histone code, and nucleosome remodeling. The protein is Histone H2B (His2B) of Drosophila erecta (Fruit fly).